The chain runs to 327 residues: Glycerol-3-phosphate dehydrogenase [NAD(P)+] (327 aa).

NADPH is bound by residues S10, F11, R31, and K108. Sn-glycerol 3-phosphate is bound by residues K108, G136, and S138. A140 provides a ligand contact to NADPH. 5 residues coordinate sn-glycerol 3-phosphate: K191, D246, S256, R257, and N258. The active-site Proton acceptor is the K191. R257 serves as a coordination point for NADPH. Residues L281 and E283 each coordinate NADPH.

Belongs to the NAD-dependent glycerol-3-phosphate dehydrogenase family.

It is found in the cytoplasm. It catalyses the reaction sn-glycerol 3-phosphate + NAD(+) = dihydroxyacetone phosphate + NADH + H(+). It carries out the reaction sn-glycerol 3-phosphate + NADP(+) = dihydroxyacetone phosphate + NADPH + H(+). The protein operates within membrane lipid metabolism; glycerophospholipid metabolism. In terms of biological role, catalyzes the reduction of the glycolytic intermediate dihydroxyacetone phosphate (DHAP) to sn-glycerol 3-phosphate (G3P), the key precursor for phospholipid synthesis. The chain is Glycerol-3-phosphate dehydrogenase [NAD(P)+] from Ehrlichia ruminantium (strain Gardel).